The primary structure comprises 399 residues: Adenylate cyclase (399 aa).

Residues 1 to 10 are compositionally biased toward polar residues; it reads MTVGDTTSGS. A disordered region spans residues 1–35; sequence MTVGDTTSGSGEEPAADSSVHATPHHEVDHTVEPT. Residues 24–33 are compositionally biased toward basic and acidic residues; the sequence is PHHEVDHTVE. In terms of domain architecture, Guanylate cyclase spans 198–307; sequence RVRFADLVGF…TTVNLASRLT (110 aa). D203 and D247 together coordinate Mg(2+).

It belongs to the adenylyl cyclase class-3 family. Mg(2+) is required as a cofactor.

It catalyses the reaction ATP = 3',5'-cyclic AMP + diphosphate. This is Adenylate cyclase (cya) from Streptomyces griseus.